Reading from the N-terminus, the 193-residue chain is Potassium-transporting ATPase KdpC subunit (193 aa).

The chain crosses the membrane as a helical span at residues 7–27 (PALVLFALLSALTGLAYPLAV).

It belongs to the KdpC family. As to quaternary structure, the system is composed of three essential subunits: KdpA, KdpB and KdpC.

The protein resides in the cell inner membrane. Part of the high-affinity ATP-driven potassium transport (or Kdp) system, which catalyzes the hydrolysis of ATP coupled with the electrogenic transport of potassium into the cytoplasm. This subunit acts as a catalytic chaperone that increases the ATP-binding affinity of the ATP-hydrolyzing subunit KdpB by the formation of a transient KdpB/KdpC/ATP ternary complex. The polypeptide is Potassium-transporting ATPase KdpC subunit (Variovorax paradoxus (strain S110)).